Reading from the N-terminus, the 321-residue chain is Malate dehydrogenase (321 aa).

NAD(+)-binding positions include 10 to 15 (GGGQIG) and Asp-34. Arg-83 and Arg-89 together coordinate substrate. NAD(+) is bound by residues Asn-96 and 119–121 (ISN). 2 residues coordinate substrate: Asn-121 and Arg-152. His-176 (proton acceptor) is an active-site residue.

This sequence belongs to the LDH/MDH superfamily. MDH type 3 family.

It catalyses the reaction (S)-malate + NAD(+) = oxaloacetate + NADH + H(+). Catalyzes the reversible oxidation of malate to oxaloacetate. This chain is Malate dehydrogenase, found in Trichlorobacter lovleyi (strain ATCC BAA-1151 / DSM 17278 / SZ) (Geobacter lovleyi).